The sequence spans 459 residues: O-phospho-L-seryl-tRNA:Cys-tRNA synthase 1 (459 aa).

Residues 152 to 153 (AR), asparagine 257, and 280 to 282 (SGH) each bind pyridoxal 5'-phosphate. Lysine 283 is subject to N6-(pyridoxal phosphate)lysine.

This sequence belongs to the SepCysS family. As to quaternary structure, homodimer. Interacts with SepRS. It depends on pyridoxal 5'-phosphate as a cofactor.

It carries out the reaction O-phospho-L-seryl-tRNA(Cys) + hydrogen sulfide + H(+) = L-cysteinyl-tRNA(Cys) + phosphate. Converts O-phospho-L-seryl-tRNA(Cys) (Sep-tRNA(Cys)) to L-cysteinyl-tRNA(Cys) (Cys-tRNA(Cys)). This Methanococcoides burtonii (strain DSM 6242 / NBRC 107633 / OCM 468 / ACE-M) protein is O-phospho-L-seryl-tRNA:Cys-tRNA synthase 1.